Reading from the N-terminus, the 971-residue chain is Isoleucine--tRNA ligase (971 aa).

A 'HIGH' region motif is present at residues 64–74; it reads PYANGHIHIGH. Residue E602 coordinates L-isoleucyl-5'-AMP. The 'KMSKS' region signature appears at 643–647; the sequence is KMSKS. K646 is an ATP binding site.

The protein belongs to the class-I aminoacyl-tRNA synthetase family. IleS type 1 subfamily. In terms of assembly, monomer.

Its subcellular location is the cytoplasm. It catalyses the reaction tRNA(Ile) + L-isoleucine + ATP = L-isoleucyl-tRNA(Ile) + AMP + diphosphate. In terms of biological role, catalyzes the attachment of isoleucine to tRNA(Ile). As IleRS can inadvertently accommodate and process structurally similar amino acids such as valine, to avoid such errors it has two additional distinct tRNA(Ile)-dependent editing activities. One activity is designated as 'pretransfer' editing and involves the hydrolysis of activated Val-AMP. The other activity is designated 'posttransfer' editing and involves deacylation of mischarged Val-tRNA(Ile). The polypeptide is Isoleucine--tRNA ligase (Bartonella quintana (strain Toulouse) (Rochalimaea quintana)).